Reading from the N-terminus, the 724-residue chain is WD repeat-containing protein 91 (724 aa).

Residues phenylalanine 178–arginine 207 adopt a coiled-coil conformation. Positions serine 249–threonine 365 are disordered. 2 stretches are compositionally biased toward polar residues: residues glycine 270 to alanine 279 and serine 303 to histidine 315. A Phosphoserine modification is found at serine 274. The span at glutamine 322–serine 333 shows a compositional bias: basic and acidic residues. The segment covering aspartate 349 to threonine 365 has biased composition (polar residues). WD repeat units follow at residues glutamate 389–alanine 428, methionine 431–glutamate 471, alanine 499–glutamine 532, proline 537–serine 576, alanine 579–serine 618, valine 641–glutamate 679, and glycine 686–proline 724.

It belongs to the WD repeat WDR91 family.

It is found in the early endosome membrane. The protein resides in the late endosome membrane. Functionally, functions as a negative regulator of the PI3 kinase/PI3K activity associated with endosomal membranes. By modifying the phosphatidylinositol 3-phosphate/PtdInsP3 content of endosomal membranes may regulate endosome fusion, recycling, sorting and early to late endosome transport. This chain is WD repeat-containing protein 91 (wdr91), found in Danio rerio (Zebrafish).